Consider the following 738-residue polypeptide: Platelet endothelial cell adhesion molecule (738 aa).

An N-terminal signal peptide occupies residues 1–27 (MQPRWAQGATMWLGVLLTLLLCSSLEG). Residues 28–601 (QENSFTINSV…VRVILAPWKK (574 aa)) are Extracellular-facing. Ig-like C2-type domains are found at residues 35–121 (NSVD…KTTA), 145–233 (GGIV…TESF), and 236–315 (PKFH…SKVS). 3 N-linked (GlcNAc...) asparagine glycosylation sites follow: Asn52, Asn84, and Asn151. A disulfide bond links Cys57 and Cys109. Intrachain disulfides connect Cys152-Cys206 and Cys256-Cys304. Residues Asn301, Asn320, Asn344, Asn356, Asn453, and Asn551 are each glycosylated (N-linked (GlcNAc...) asparagine). Ig-like C2-type domains lie at 328 to 401 (PELE…NTVQ), 424 to 493 (GQTI…EVLR), and 499 to 591 (PVDE…KILT). 3 disulfides stabilise this stretch: Cys347–Cys386, Cys431–Cys476, and Cys523–Cys572. Residues 602–620 (GLIAVVIIGVIIALLIIAA) form a helical membrane-spanning segment. The Cytoplasmic portion of the chain corresponds to 621-738 (KCYFLRKAKA…SRTEGSLDGT (118 aa)). Residue Cys622 is the site of S-palmitoyl cysteine attachment. Residues 658-715 (EANSHYGHNDDVRNHAMKPINDNKEPLNSDVQYTEVQVSSAESHKDLGKKDTETVYSE) form a disordered region. Residues 686-698 (SDVQYTEVQVSSA) are compositionally biased toward polar residues. Short sequence motifs (ITIM motif) lie at residues 688–693 (VQYTEV) and 711–716 (TVYSEV). A phosphotyrosine; by FER mark is found at Tyr690 and Tyr713. The span at 699 to 715 (ESHKDLGKKDTETVYSE) shows a compositional bias: basic and acidic residues. The membrane-bound segment which detaches upon phosphorylation stretch occupies residues 709 to 729 (TETVYSEVRKAVPDAVESRYS). The tract at residues 721–738 (PDAVESRYSRTEGSLDGT) is may play a role in cytoprotective signaling. Residues Ser729 and Ser734 each carry the phosphoserine modification.

In terms of assembly, trans-homodimer (via Ig-like C2-type 1 and Ig-like C2-type 2 domains); trans-homodimerization is required for cell-cell interaction. Forms a complex with BDKRB2 and GNAQ. Interacts with BDKRB2 and GNAQ. Interacts with PTPN11; Tyr-713 is critical for PTPN11 recruitment. Interacts with FER. Interacts (via Ig-like C2-type domain 6) with CD177; the interaction is Ca(2+)-dependent; the interaction is direct. Post-translationally, phosphorylated on Ser and Tyr residues after cellular activation by src kinases. Upon activation, phosphorylated on Ser-729 which probably initiates the dissociation of the membrane-interaction segment (residues 709-729) from the cell membrane allowing the sequential phosphorylation of Tyr-713 and Tyr-690. Constitutively phosphorylated on Ser-734 in resting platelets. Phosphorylated on tyrosine residues by FER and FES in response to FCER1 activation. In endothelial cells Fyn mediates mechanical-force (stretch or pull) induced tyrosine phosphorylation. In terms of processing, palmitoylation by ZDHHC21 is necessary for cell surface expression in endothelial cells and enrichment in membrane rafts. As to expression, expressed on platelets and leukocytes and is primarily concentrated at the borders between endothelial cells. Expressed in human umbilical vein endothelial cells (HUVECs) (at protein level). Expressed on neutrophils (at protein level). Isoform Long predominates in all tissues examined. Isoform Delta12 is detected only in trachea. Isoform Delta14-15 is only detected in lung. Isoform Delta14 is detected in all tissues examined with the strongest expression in heart. Isoform Delta15 is expressed in brain, testis, ovary, cell surface of platelets, human umbilical vein endothelial cells (HUVECs), Jurkat T-cell leukemia, human erythroleukemia (HEL) and U-937 histiocytic lymphoma cell lines (at protein level).

Its subcellular location is the cell membrane. The protein resides in the membrane raft. The protein localises to the cell junction. Cell adhesion molecule which is required for leukocyte transendothelial migration (TEM) under most inflammatory conditions. Tyr-690 plays a critical role in TEM and is required for efficient trafficking of PECAM1 to and from the lateral border recycling compartment (LBRC) and is also essential for the LBRC membrane to be targeted around migrating leukocytes. Trans-homophilic interaction may play a role in endothelial cell-cell adhesion via cell junctions. Heterophilic interaction with CD177 plays a role in transendothelial migration of neutrophils. Homophilic ligation of PECAM1 prevents macrophage-mediated phagocytosis of neighboring viable leukocytes by transmitting a detachment signal. Promotes macrophage-mediated phagocytosis of apoptotic leukocytes by tethering them to the phagocytic cells; PECAM1-mediated detachment signal appears to be disabled in apoptotic leukocytes. Modulates bradykinin receptor BDKRB2 activation. Regulates bradykinin- and hyperosmotic shock-induced ERK1/2 activation in endothelial cells. Induces susceptibility to atherosclerosis. In terms of biological role, does not protect against apoptosis. This is Platelet endothelial cell adhesion molecule (PECAM1) from Homo sapiens (Human).